Reading from the N-terminus, the 306-residue chain is NAD kinase 1 (306 aa).

Asp67 serves as the catalytic Proton acceptor. Residues Asp67–Gly68, Asn149–Glu150, Asp181, and Thr192–Ser197 each bind NAD(+).

The protein belongs to the NAD kinase family. It depends on a divalent metal cation as a cofactor.

It is found in the cytoplasm. It catalyses the reaction NAD(+) + ATP = ADP + NADP(+) + H(+). Involved in the regulation of the intracellular balance of NAD and NADP, and is a key enzyme in the biosynthesis of NADP. Catalyzes specifically the phosphorylation on 2'-hydroxyl of the adenosine moiety of NAD to yield NADP. In Trichormus variabilis (strain ATCC 29413 / PCC 7937) (Anabaena variabilis), this protein is NAD kinase 1.